The chain runs to 94 residues: Small ribosomal subunit protein uS19 (94 aa).

The protein belongs to the universal ribosomal protein uS19 family.

Its function is as follows. Protein S19 forms a complex with S13 that binds strongly to the 16S ribosomal RNA. The protein is Small ribosomal subunit protein uS19 of Acetivibrio thermocellus (strain ATCC 27405 / DSM 1237 / JCM 9322 / NBRC 103400 / NCIMB 10682 / NRRL B-4536 / VPI 7372) (Clostridium thermocellum).